Consider the following 414-residue polypeptide: WW domain-containing oxidoreductase (414 aa).

The segment at 1-24 is disordered; it reads MAALRYAGLDDTDSEDELPPGWEE. Phosphothreonine is present on Thr-12. Ser-14 is modified (phosphoserine). Residues 16–49 enclose the WW 1 domain; the sequence is DELPPGWEERTTKDGWVYYANHTEEKTQWEHPKT. At Tyr-33 the chain carries Phosphotyrosine. A Nuclear localization signal motif is present at residues 50-55; the sequence is GKRKRV. One can recognise a WW 2 domain in the interval 57–90; sequence GDLPYGWEQGTDENGQVFFVDHINKRTTYLDPRL. Positions 125–414 are interaction with MAPT; that stretch reads KVVVVTGANS…IQERLGSQSG (290 aa). Residue 131 to 137 coordinates NADP(+); sequence GANSGIG. The interval 209–273 is mediates targeting to the mitochondria; that stretch reads CNAATFALPW…RFTDINDSLG (65 aa). Residue Ser-260 participates in substrate binding. Residue Tyr-287 is modified to Phosphotyrosine; by TNK2. Catalysis depends on Tyr-293, which acts as the Proton acceptor.

The protein belongs to the short-chain dehydrogenases/reductases (SDR) family. As to quaternary structure, interacts with TP53, p73/TP73 and MAPK8. Interacts with MAPT/TAU, RUNX2 and HYAL2. Forms a ternary complex with TP53 and MDM2. Interacts with ERBB4, LITAF and WBP1. Interacts with DVL1, DVL2 and DVL3. May interact with FAM189B and SCOTIN. Interacts with TNK2. Interacts with TMEM207. Interacts (via WW domain) with VOPP1. Phosphorylated upon genotoxic stress. Phosphorylation of Tyr-33 regulates interaction with TP53, TP73 and MAPK8. May also regulate proapoptotic activity. Phosphorylation by TNK2 is associated with polyubiquitination and degradation. In terms of processing, ubiquitinated when phosphorylated by TNK2, leading to its degradation.

The protein resides in the cytoplasm. The protein localises to the nucleus. It is found in the mitochondrion. Its subcellular location is the golgi apparatus. It localises to the lysosome. In terms of biological role, putative oxidoreductase. Acts as a tumor suppressor and plays a role in apoptosis. May function synergistically with p53/TP53 to control genotoxic stress-induced cell death. Plays a role in TGFB1 signaling and TGFB1-mediated cell death. May also play a role in tumor necrosis factor (TNF)-mediated cell death. Required for normal bone development. Inhibits Wnt signaling, probably by sequestering DVL2 in the cytoplasm. The chain is WW domain-containing oxidoreductase (WWOX) from Pongo abelii (Sumatran orangutan).